Here is a 376-residue protein sequence, read N- to C-terminus: Alcohol dehydrogenase 6 (376 aa).

Zn(2+)-binding residues include cysteine 47, histidine 69, cysteine 99, cysteine 102, cysteine 105, cysteine 113, and cysteine 175. NAD(+) contacts are provided by residues 200–205 (GLGGVG), aspartate 224, arginine 229, 293–295 (VGA), and arginine 371.

The protein belongs to the zinc-containing alcohol dehydrogenase family. Class-V subfamily. Dimer. Requires Zn(2+) as cofactor.

The protein localises to the cytoplasm. The catalysed reaction is a primary alcohol + NAD(+) = an aldehyde + NADH + H(+). It carries out the reaction a secondary alcohol + NAD(+) = a ketone + NADH + H(+). Functionally, alcohol dehydrogenase. Catalyzes the NAD-dependent oxidation of primary alcohols to the corresponding aldehydes. Oxidizes secondary alcohols to the corresponding ketones. This Rattus norvegicus (Rat) protein is Alcohol dehydrogenase 6 (Adh6).